A 91-amino-acid polypeptide reads, in one-letter code: uncharacterized protein (91 aa).

The segment at 71–91 (EANDRPSKKCGSGNLRVEKLV) is disordered.

This is an uncharacterized protein from Archaeoglobus fulgidus (strain ATCC 49558 / DSM 4304 / JCM 9628 / NBRC 100126 / VC-16).